The following is a 948-amino-acid chain: MSSSKLMDFGLTWIIMMMILLQGCRSCIESERQGLLEIKAYIISVITDPHLDIRRGWMSSDRSCCHWRRIKCDITSKRVIGISLSLESIRPPDPLPQLNLTFFYPFEELQSLNLSSGYFKGWFDERKGGKGLGSLRNLETLDLGVNFYDTSVLPYLNEAVSLKTLILHDNLFKGGFPVQELINLTSLEVLDLKFNKFSGQLPTQELTNLRNLRALDLSNNKFSGSLQKQGICRLEQLQELRLSRNRFEGEIPLCFSRFSKLRVLDLSSNHLSGKIPYFISDFKSMEYLSLLDNDFEGLFSLGLITELTELKVFKLSSRSGMLQIVETNVSGGLQSQLSSIMLSHCNLGKIPGFLWYQQELRVIDLSNNILSGVFPTWLLENNTELQALLLQNNSFKTLTLPRTMRRLQILDLSVNNFNNQLPKDVGLILASLRHLNLSNNEFLGNMPSSMARMENIEFMDLSYNNFSGKLPRNLFTGCYSLSWLKLSHNRFSGPIIRKSSDETSLITLIMDNNMFTGKIPRTLLNLRMLSVIDLSNNLLTGTIPRWLGNFFLEVLRISNNRLQGAIPPSLFNIPYLWLLDLSGNFLSGSLPLRSSSDYGYILDLHNNNLTGSIPDTLWYGLRLLDLRNNKLSGNIPLFRSTPSISVVLLRENNLTGKIPVELCGLSNVRMLDFAHNRLNESIPSCVTNLSFGSGGHSNADSDWYPASLLSNFMEIYTEVYYESLIVSDRFSLDYSVDFNVQVEFAVKQRYDLYMRGTLNQMFGLDLSSNELSGNIPEELGDLKRVRSLNLSRNSLSGSIPGSFSNLRSIESLDLSFNKLHGTIPSQLTLLQSLVVFNVSYNNLSGVIPQGKQFNTFGEKSYLGNFLLCGSPTKRSCGGTTISSGKEYEDDDESGLLDIVVLWWSLGTTYVTVMMGFLVFLCFDSPWRRAWFCLVDTFIDRVKDVLGVI.

Positions 1 to 26 (MSSSKLMDFGLTWIIMMMILLQGCRS) are cleaved as a signal peptide. Over 27–897 (CIESERQGLL…EDDDESGLLD (871 aa)) the chain is Extracellular. Asn99 and Asn113 each carry an N-linked (GlcNAc...) asparagine glycan. 2 LRR repeats span residues 106-129 (FEEL…RKGG) and 135-162 (LRNL…AVSL). The LRR 3; degenerate repeat unit spans residues 163–183 (KTLILHDNLFKGGFPVQELIN). N-linked (GlcNAc...) asparagine glycosylation occurs at Asn183. LRR repeat units lie at residues 184-208 (LTSL…ELTN), 210-233 (RNLR…GICR), 234-257 (LEQL…CFSR), 258-284 (FSKL…DFKS), 286-306 (EYLS…LITE), 307-332 (LTEL…VSGG), 334-357 (QSQL…LWYQ), 358-381 (QELR…LLEN), 382-404 (NTEL…PRTM), 405-429 (RRLQ…GLIL), 430-453 (ASLR…MARM), 454-477 (ENIE…LFTG), 479-502 (YSLS…SSDE), 503-526 (TSLI…LLNL), 527-549 (RMLS…WLGN), 550-573 (FFLE…LFNI), 575-595 (YLWL…LRSS), 596-618 (SDYG…DTLW), 619-640 (YGLR…LFRS), 642-665 (PSIS…LCGL), 666-689 (SNVR…VTNL), 758-782 (LNQM…LGDL), 783-805 (KRVR…SFSN), 807-831 (RSIE…TLLQ), and 833-855 (LVVF…QFNT). A glycan (N-linked (GlcNAc...) asparagine) is linked at Asn328. 2 N-linked (GlcNAc...) asparagine glycosylation sites follow: Asn381 and Asn392. N-linked (GlcNAc...) asparagine glycosylation is found at Asn436 and Asn465. Asn608 is a glycosylation site (N-linked (GlcNAc...) asparagine). N-linked (GlcNAc...) asparagine glycans are attached at residues Asn653, Asn679, and Asn688. A glycan (N-linked (GlcNAc...) asparagine) is linked at Asn789. N-linked (GlcNAc...) asparagine glycans are attached at residues Asn837 and Asn842. The helical transmembrane segment at 898–918 (IVVLWWSLGTTYVTVMMGFLV) threads the bilayer. Residues 919-948 (FLCFDSPWRRAWFCLVDTFIDRVKDVLGVI) lie on the Cytoplasmic side of the membrane.

Belongs to the RLP family.

Its subcellular location is the cell membrane. The chain is Receptor-like protein 45 from Arabidopsis thaliana (Mouse-ear cress).